The primary structure comprises 170 residues: CDP-archaeol synthase (170 aa).

5 consecutive transmembrane segments (helical) span residues 9–29 (AFWY…LGGG), 53–73 (GFFG…FLLP), 79–99 (LGIA…GDLI), 114–134 (PAVG…AYPV), and 140–160 (GEVL…NIFA).

It belongs to the CDP-archaeol synthase family. Requires Mg(2+) as cofactor.

The protein localises to the cell membrane. It catalyses the reaction 2,3-bis-O-(geranylgeranyl)-sn-glycerol 1-phosphate + CTP + H(+) = CDP-2,3-bis-O-(geranylgeranyl)-sn-glycerol + diphosphate. It functions in the pathway membrane lipid metabolism; glycerophospholipid metabolism. In terms of biological role, catalyzes the formation of CDP-2,3-bis-(O-geranylgeranyl)-sn-glycerol (CDP-archaeol) from 2,3-bis-(O-geranylgeranyl)-sn-glycerol 1-phosphate (DGGGP) and CTP. This reaction is the third ether-bond-formation step in the biosynthesis of archaeal membrane lipids. This chain is CDP-archaeol synthase, found in Pyrococcus horikoshii (strain ATCC 700860 / DSM 12428 / JCM 9974 / NBRC 100139 / OT-3).